The chain runs to 249 residues: ATP synthase subunit a, chloroplastic (249 aa).

Transmembrane regions (helical) follow at residues 38–58 (GQVL…SVIA), 97–117 (VPFV…GALI), 136–156 (INTT…AGLS), 201–221 (LVVA…MMLL), and 222–242 (GLFT…AYIG).

It belongs to the ATPase A chain family. In terms of assembly, F-type ATPases have 2 components, CF(1) - the catalytic core - and CF(0) - the membrane proton channel. CF(1) has five subunits: alpha(3), beta(3), gamma(1), delta(1), epsilon(1). CF(0) has four main subunits: a, b, b' and c.

Its subcellular location is the plastid. It localises to the chloroplast thylakoid membrane. Functionally, key component of the proton channel; it plays a direct role in the translocation of protons across the membrane. The protein is ATP synthase subunit a, chloroplastic of Chlorokybus atmophyticus (Soil alga).